A 452-amino-acid polypeptide reads, in one-letter code: uncharacterized protein (452 aa).

The protein localises to the cytoplasm. It localises to the nucleus. This is an uncharacterized protein from Schizosaccharomyces pombe (strain 972 / ATCC 24843) (Fission yeast).